A 280-amino-acid chain; its full sequence is 2-dehydro-3-deoxyphosphooctonate aldolase 2 (280 aa).

The protein belongs to the KdsA family.

It localises to the cytoplasm. The catalysed reaction is D-arabinose 5-phosphate + phosphoenolpyruvate + H2O = 3-deoxy-alpha-D-manno-2-octulosonate-8-phosphate + phosphate. It participates in carbohydrate biosynthesis; 3-deoxy-D-manno-octulosonate biosynthesis; 3-deoxy-D-manno-octulosonate from D-ribulose 5-phosphate: step 2/3. Its pathway is bacterial outer membrane biogenesis; lipopolysaccharide biosynthesis. The sequence is that of 2-dehydro-3-deoxyphosphooctonate aldolase 2 (kdsA2) from Pseudomonas putida (strain ATCC 47054 / DSM 6125 / CFBP 8728 / NCIMB 11950 / KT2440).